Consider the following 371-residue polypeptide: MGTKTKKTLFNVDEQMKAIAAQFETLQILNEKGEVVNEAAMPELSDDQLKELMRRMVYTRVLDQRSISLNRQGRLGFYAPTAGQEASQLASHFALEAEDFILPGYRDVPQLVWHGLPLYQAFLFSRGHFMGNQMPENVNALAPQIIIGAQIIQTAGVALGMKLRGKKSVAITYTGDGGASQGDFYEGMNFAGAFKAPAIFVVQNNRYAISTPVEKQSAAKTVAQKAVAAGIYGIQVDGMDPLAVYAATAFARERAVNGEGPTLIETLTFRYGPHTMAGDDPTRYRTKDIENEWEQKDPIVRFRAFLENKGLWSQEVEEKVIEEAKEDIKQAIAKADQAPKQKVTDLMEIMYEKMPYNLAEQYEIYKEKESK.

In terms of assembly, heterodimer of an alpha and a beta chain. The cofactor is thiamine diphosphate.

It catalyses the reaction N(6)-[(R)-lipoyl]-L-lysyl-[protein] + pyruvate + H(+) = N(6)-[(R)-S(8)-acetyldihydrolipoyl]-L-lysyl-[protein] + CO2. Its function is as follows. The pyruvate dehydrogenase complex catalyzes the overall conversion of pyruvate to acetyl-CoA and CO(2). It contains multiple copies of three enzymatic components: pyruvate dehydrogenase (E1), dihydrolipoamide acetyltransferase (E2) and lipoamide dehydrogenase (E3). The chain is Pyruvate dehydrogenase E1 component subunit alpha from Bacillus cereus.